Reading from the N-terminus, the 234-residue chain is Flagellar L-ring protein (234 aa).

The first 15 residues, 1–15, serve as a signal peptide directing secretion; that stretch reads MRYAVICMLLLAASG. The N-palmitoyl cysteine moiety is linked to residue Cys16. Residue Cys16 is the site of S-diacylglycerol cysteine attachment.

Belongs to the FlgH family. The basal body constitutes a major portion of the flagellar organelle and consists of four rings (L,P,S, and M) mounted on a central rod.

It localises to the cell outer membrane. The protein localises to the bacterial flagellum basal body. Its function is as follows. Assembles around the rod to form the L-ring and probably protects the motor/basal body from shearing forces during rotation. The protein is Flagellar L-ring protein of Oleidesulfovibrio alaskensis (strain ATCC BAA-1058 / DSM 17464 / G20) (Desulfovibrio alaskensis).